Consider the following 141-residue polypeptide: Large ribosomal subunit protein uL14 (141 aa).

It belongs to the universal ribosomal protein uL14 family. In terms of assembly, part of the 50S ribosomal subunit. Forms a cluster with proteins L3 and L24e, part of which may contact the 16S rRNA in 2 intersubunit bridges.

Binds to 23S rRNA. Forms part of two intersubunit bridges in the 70S ribosome. In Thermofilum pendens (strain DSM 2475 / Hrk 5), this protein is Large ribosomal subunit protein uL14.